The chain runs to 334 residues: B3 domain-containing protein LOC_Os12g40090 (334 aa).

The TF-B3 1 DNA-binding region spans Arg5–Ser102. The segment at Thr142 to Cys178 is disordered. Low complexity predominate over residues Lys154–Lys166. The TF-B3 2 DNA-binding region spans Phe227–Ala326.

The protein localises to the nucleus. The polypeptide is B3 domain-containing protein LOC_Os12g40090 (Oryza sativa subsp. japonica (Rice)).